The chain runs to 154 residues: Interleukin-7 (154 aa).

The N-terminal stretch at 1–25 (MFHVSFRYIFGIPPLILVLLPVTSS) is a signal peptide. 3 disulfides stabilise this stretch: Cys27–Cys145, Cys58–Cys133, and Cys71–Cys116. N-linked (GlcNAc...) asparagine glycans are attached at residues Asn94 and Asn115.

This sequence belongs to the IL-7/IL-9 family. Interacts with IL7R and CSF2RG. In terms of processing, three disulfide bonds are present.

The protein localises to the secreted. Functionally, hematopoietic cytokine that plays an essential role in the development, expansion, and survival of naive and memory T-cells and B-cells thereby regulating the number of mature lymphocytes and maintaining lymphoid homeostasis. Mechanistically, exerts its biological effects through a receptor composed of IL7RA subunit and the cytokine receptor common subunit gamma/CSF2RG. Binding to the receptor leads to activation of various kinases including JAK1 or JAK3 depending on the cell type and subsequently propagation of signals through activation of several downstream signaling pathways including the PI3K/Akt/mTOR or the JAK-STAT5. In Rattus norvegicus (Rat), this protein is Interleukin-7 (Il7).